The chain runs to 490 residues: Cytochrome P450 71A22 (490 aa).

Residues glutamate 2–isoleucine 22 traverse the membrane as a helical segment. A heme-binding site is contributed by cysteine 432.

This sequence belongs to the cytochrome P450 family. Heme serves as cofactor.

It localises to the membrane. The chain is Cytochrome P450 71A22 (CYP71A22) from Arabidopsis thaliana (Mouse-ear cress).